Reading from the N-terminus, the 557-residue chain is Putative UDP-glucuronate:xylan alpha-glucuronosyltransferase 4 (557 aa).

The helical; Signal-anchor for type II membrane protein transmembrane segment at 11–31 threads the bilayer; that stretch reads KIFMIYLILVSLSLLGLILPF. Aspartate 365 and aspartate 367 together coordinate Mn(2+). Substrate-binding positions include 365 to 367, 394 to 396, 421 to 425, and 466 to 471; these read DAD, NSG, NGGDQ, and HYLGLK. Residue histidine 466 coordinates Mn(2+).

The protein belongs to the glycosyltransferase 8 family. Glycogenin subfamily. Mn(2+) is required as a cofactor.

It localises to the golgi apparatus membrane. Functionally, may be involved in the substitutions of the xylan backbone in stem glucuronoxylan. The sequence is that of Putative UDP-glucuronate:xylan alpha-glucuronosyltransferase 4 (GUX4) from Arabidopsis thaliana (Mouse-ear cress).